A 339-amino-acid chain; its full sequence is Probable cytosolic iron-sulfur protein assembly protein CIAO1 (339 aa).

7 WD repeats span residues His-14 to Lys-53, Gly-59 to Val-98, Gly-103 to Cys-142, Ser-148 to Cys-187, Gly-192 to Gly-231, Phe-250 to Gln-289, and Ala-301 to Ile-339. The short motif at Leu-176–Arg-178 is the LYR motif; required for interaction with HSC20 element.

Belongs to the WD repeat CIA1 family. Component of the CIA complex. Interacts with CIAO2A and forms a complex with CIAO2B and MMS19; the interactions with CIAO2A and CIAO2B are mutually exclusive. Interacts with CHD1L, ERCC2, IREB2 and POLD1. Component of the MMXD complex, which includes CIAO1, ERCC2, CIAO2B, MMS19 and SLC25A5. Interacts with WT1. Interacts with CIAO3. Interacts (via LYR motif) with HSC20.

Its subcellular location is the cytoplasm. Functionally, key component of the cytosolic iron-sulfur protein assembly (CIA) complex, a multiprotein complex that mediates the incorporation of iron-sulfur cluster into extramitochondrial Fe/S proteins. As a CIA complex component, interacts specifically with CIAO2A or CIAO2B and MMS19 to assist different branches of iron-sulfur protein assembly, depending of its interactors. The complex CIAO1:CIAO2B:MMS19 binds to and facilitates the assembly of most cytosolic-nuclear Fe/S proteins. CIAO1:CIAO2A specifically matures ACO1 and stabilizes IREB2. Seems to specifically modulate the transactivation activity of WT1. As part of the mitotic spindle-associated MMXD complex it may play a role in chromosome segregation. This is Probable cytosolic iron-sulfur protein assembly protein CIAO1 from Bos taurus (Bovine).